A 92-amino-acid polypeptide reads, in one-letter code: Small ribosomal subunit protein uS19c (92 aa).

This sequence belongs to the universal ribosomal protein uS19 family.

It is found in the plastid. It localises to the chloroplast. Functionally, protein S19 forms a complex with S13 that binds strongly to the 16S ribosomal RNA. The sequence is that of Small ribosomal subunit protein uS19c from Thalassiosira pseudonana (Marine diatom).